Consider the following 361-residue polypeptide: tRNA 2-selenouridine synthase (361 aa).

Residues valine 12–glutamate 135 form the Rhodanese domain. Residue cysteine 95 is the S-selanylcysteine intermediate of the active site.

The protein belongs to the SelU family. Monomer.

It carries out the reaction 5-methylaminomethyl-2-thiouridine(34) in tRNA + selenophosphate + (2E)-geranyl diphosphate + H2O + H(+) = 5-methylaminomethyl-2-selenouridine(34) in tRNA + (2E)-thiogeraniol + phosphate + diphosphate. The catalysed reaction is 5-methylaminomethyl-2-thiouridine(34) in tRNA + (2E)-geranyl diphosphate = 5-methylaminomethyl-S-(2E)-geranyl-thiouridine(34) in tRNA + diphosphate. The enzyme catalyses 5-methylaminomethyl-S-(2E)-geranyl-thiouridine(34) in tRNA + selenophosphate + H(+) = 5-methylaminomethyl-2-(Se-phospho)selenouridine(34) in tRNA + (2E)-thiogeraniol. It catalyses the reaction 5-methylaminomethyl-2-(Se-phospho)selenouridine(34) in tRNA + H2O = 5-methylaminomethyl-2-selenouridine(34) in tRNA + phosphate. Its function is as follows. Involved in the post-transcriptional modification of the uridine at the wobble position (U34) of tRNA(Lys), tRNA(Glu) and tRNA(Gln). Catalyzes the conversion of 2-thiouridine (S2U-RNA) to 2-selenouridine (Se2U-RNA). Acts in a two-step process involving geranylation of 2-thiouridine (S2U) to S-geranyl-2-thiouridine (geS2U) and subsequent selenation of the latter derivative to 2-selenouridine (Se2U) in the tRNA chain. This Hydrogenovibrio crunogenus (strain DSM 25203 / XCL-2) (Thiomicrospira crunogena) protein is tRNA 2-selenouridine synthase.